A 250-amino-acid chain; its full sequence is Large ribosomal subunit protein uL30B (250 aa).

Belongs to the universal ribosomal protein uL30 family. As to quaternary structure, component of the large ribosomal subunit (LSU). Mature yeast ribosomes consist of a small (40S) and a large (60S) subunit. The 40S small subunit contains 1 molecule of ribosomal RNA (18S rRNA) and at least 33 different proteins. The large 60S subunit contains 3 rRNA molecules (25S, 5.8S and 5S rRNA) and at least 46 different proteins.

It is found in the cytoplasm. The protein localises to the nucleus. It localises to the nucleolus. Component of the ribosome, a large ribonucleoprotein complex responsible for the synthesis of proteins in the cell. The small ribosomal subunit (SSU) binds messenger RNAs (mRNAs) and translates the encoded message by selecting cognate aminoacyl-transfer RNA (tRNA) molecules. The large subunit (LSU) contains the ribosomal catalytic site termed the peptidyl transferase center (PTC), which catalyzes the formation of peptide bonds, thereby polymerizing the amino acids delivered by tRNAs into a polypeptide chain. The nascent polypeptides leave the ribosome through a tunnel in the LSU and interact with protein factors that function in enzymatic processing, targeting, and the membrane insertion of nascent chains at the exit of the ribosomal tunnel. The chain is Large ribosomal subunit protein uL30B (rpl702) from Schizosaccharomyces pombe (strain 972 / ATCC 24843) (Fission yeast).